We begin with the raw amino-acid sequence, 403 residues long: Homoserine O-succinyltransferase (403 aa).

The AB hydrolase-1 domain occupies asparagine 58 to leucine 366. The active-site Nucleophile is serine 164. Residue arginine 234 coordinates substrate. Residues aspartate 329 and histidine 362 contribute to the active site. Residue aspartate 363 participates in substrate binding.

The protein belongs to the AB hydrolase superfamily. MetX family. As to quaternary structure, homodimer.

The protein resides in the cytoplasm. It carries out the reaction L-homoserine + succinyl-CoA = O-succinyl-L-homoserine + CoA. It participates in amino-acid biosynthesis; L-methionine biosynthesis via de novo pathway; O-succinyl-L-homoserine from L-homoserine: step 1/1. Its function is as follows. Transfers a succinyl group from succinyl-CoA to L-homoserine, forming succinyl-L-homoserine. The protein is Homoserine O-succinyltransferase of Halothiobacillus neapolitanus (strain ATCC 23641 / c2) (Thiobacillus neapolitanus).